We begin with the raw amino-acid sequence, 765 residues long: Protein transport protein Sec23A (765 aa).

Residues cysteine 61, cysteine 66, cysteine 85, and cysteine 88 each contribute to the Zn(2+) site. A Gelsolin-like repeat occupies 632-718; the sequence is PEPVLLDSSS…EHGGSQARFL (87 aa).

Belongs to the SEC23/SEC24 family. SEC23 subfamily. As to quaternary structure, COPII is composed of at least five proteins: the Sec23/24 complex, the Sec13/31 complex and Sar1.

Its subcellular location is the cytoplasmic vesicle. It is found in the COPII-coated vesicle membrane. It localises to the endoplasmic reticulum membrane. The protein resides in the cytoplasm. The protein localises to the cytosol. In terms of biological role, component of the coat protein complex II (COPII) which promotes the formation of transport vesicles from the endoplasmic reticulum (ER). The coat has two main functions, the physical deformation of the endoplasmic reticulum membrane into vesicles and the selection of cargo molecules for their transport to the Golgi complex. This is Protein transport protein Sec23A from Xenopus tropicalis (Western clawed frog).